The primary structure comprises 337 residues: Probable sulfurtransferase (337 aa).

Gly-83 is an ATP binding site. 2 residues coordinate [4Fe-4S] cluster: Cys-172 and Cys-175. The ATP site is built by Lys-179 and Gly-206. Cys-284 lines the [4Fe-4S] cluster pocket.

This sequence belongs to the TtcA family. It depends on [4Fe-4S] cluster as a cofactor. Mg(2+) serves as cofactor.

In Methanocaldococcus jannaschii (strain ATCC 43067 / DSM 2661 / JAL-1 / JCM 10045 / NBRC 100440) (Methanococcus jannaschii), this protein is Probable sulfurtransferase.